The primary structure comprises 155 residues: FHA domain-containing protein FhaB (155 aa).

A helical transmembrane segment spans residues 6-28 (LQLTRAGFLMLLWVFIWSVLRIL). Thr-36 is subject to Phosphothreonine. Positions 83-132 (VLIGRADDSTLVLTDDYASTRHARLSMRGSEWYVEDLGSTNGTYLDRAKV) constitute an FHA domain.

Post-translationally, phosphorylated by PknB. Dephosphorylated by PstP.

The protein resides in the cell membrane. The protein is FHA domain-containing protein FhaB (fhaB) of Mycobacterium tuberculosis (strain CDC 1551 / Oshkosh).